The primary structure comprises 342 residues: Putative aryl-alcohol dehydrogenase AAD16 (342 aa).

Belongs to the aldo/keto reductase family. Aldo/keto reductase 2 subfamily.

Its function is as follows. Putative aryl-alcohol dehydrogenase. The sequence is that of Putative aryl-alcohol dehydrogenase AAD16 from Saccharomyces cerevisiae (strain ATCC 204508 / S288c) (Baker's yeast).